A 588-amino-acid chain; its full sequence is Aspartate--tRNA ligase (588 aa).

An L-aspartate-binding site is contributed by E174. The tract at residues 198-201 (QLFK) is aspartate. L-aspartate is bound at residue R220. Residues 220–222 (RDE) and Q229 contribute to the ATP site. H448 contributes to the L-aspartate binding site. E482 is a binding site for ATP. Residue R489 coordinates L-aspartate. 534 to 537 (GIDR) is a binding site for ATP.

This sequence belongs to the class-II aminoacyl-tRNA synthetase family. Type 1 subfamily. In terms of assembly, homodimer.

It is found in the cytoplasm. It catalyses the reaction tRNA(Asp) + L-aspartate + ATP = L-aspartyl-tRNA(Asp) + AMP + diphosphate. In terms of biological role, catalyzes the attachment of L-aspartate to tRNA(Asp) in a two-step reaction: L-aspartate is first activated by ATP to form Asp-AMP and then transferred to the acceptor end of tRNA(Asp). In Xanthomonas campestris pv. campestris (strain B100), this protein is Aspartate--tRNA ligase.